The following is a 440-amino-acid chain: UPF0489 protein C5orf22 homolog (440 aa).

The tract at residues Val187 to Met207 is disordered. Residues Glu188 to Glu200 show a composition bias toward low complexity.

It belongs to the UPF0489 family.

This is UPF0489 protein C5orf22 homolog from Xenopus tropicalis (Western clawed frog).